The sequence spans 119 residues: Large ribosomal subunit protein bL20 (119 aa).

Belongs to the bacterial ribosomal protein bL20 family.

Functionally, binds directly to 23S ribosomal RNA and is necessary for the in vitro assembly process of the 50S ribosomal subunit. It is not involved in the protein synthesizing functions of that subunit. The polypeptide is Large ribosomal subunit protein bL20 (Sorangium cellulosum (strain So ce56) (Polyangium cellulosum (strain So ce56))).